The primary structure comprises 419 residues: Gamma-glutamyl phosphate reductase (419 aa).

The protein belongs to the gamma-glutamyl phosphate reductase family.

It localises to the cytoplasm. The enzyme catalyses L-glutamate 5-semialdehyde + phosphate + NADP(+) = L-glutamyl 5-phosphate + NADPH + H(+). It participates in amino-acid biosynthesis; L-proline biosynthesis; L-glutamate 5-semialdehyde from L-glutamate: step 2/2. Functionally, catalyzes the NADPH-dependent reduction of L-glutamate 5-phosphate into L-glutamate 5-semialdehyde and phosphate. The product spontaneously undergoes cyclization to form 1-pyrroline-5-carboxylate. This chain is Gamma-glutamyl phosphate reductase, found in Mannheimia succiniciproducens (strain KCTC 0769BP / MBEL55E).